A 149-amino-acid polypeptide reads, in one-letter code: Putative prefoldin subunit alpha (149 aa).

This sequence belongs to the prefoldin subunit alpha family.

It is found in the cytoplasm. Its function is as follows. Molecular chaperone capable of stabilizing a range of proteins. The sequence is that of Putative prefoldin subunit alpha from Aquifex aeolicus (strain VF5).